Consider the following 570-residue polypeptide: Glycine--tRNA ligase (570 aa).

The substrate site is built by Arg99 and Glu165. ATP is bound by residues 197 to 199 (RNE), 207 to 212 (IRLREF), 324 to 325 (EC), and 443 to 446 (GIDR). 212–216 (FTQAE) contacts substrate. 439–443 (EPSFG) is a binding site for substrate.

The protein belongs to the class-II aminoacyl-tRNA synthetase family.

The protein localises to the cytoplasm. The catalysed reaction is tRNA(Gly) + glycine + ATP = glycyl-tRNA(Gly) + AMP + diphosphate. Its function is as follows. Catalyzes the attachment of glycine to tRNA(Gly). This Pyrococcus horikoshii (strain ATCC 700860 / DSM 12428 / JCM 9974 / NBRC 100139 / OT-3) protein is Glycine--tRNA ligase.